We begin with the raw amino-acid sequence, 114 residues long: Macrophage migration inhibitory factor homolog (114 aa).

The active-site Proton acceptor; via imino nitrogen is P2. Positions 33 and 65 each coordinate substrate.

This sequence belongs to the MIF family.

The protein localises to the secreted. It carries out the reaction L-dopachrome = 5,6-dihydroxyindole-2-carboxylate. It catalyses the reaction 3-phenylpyruvate = enol-phenylpyruvate. Its function is as follows. Tautomerization of the methyl ester of L-dopachrome. Inhibits migration of human peripheral blood mononuclear cells. In Trichinella spiralis (Trichina worm), this protein is Macrophage migration inhibitory factor homolog.